We begin with the raw amino-acid sequence, 193 residues long: MVVNKTTAVLYLIALSLSGFIHTFLRAEERGIYDDVFTADELHHYRINERGGRTGSLAVSGALLSSPCTLVSNEVPLSLRPENHSASRGAPLMLRLAGCGDGGALQPGKRGVAMTVSGSLVTGPGSGSALLPDRKLSGCDHLVIHDGDTFLLCRPDRRQEEMLAAWRKRATQEGEYSDARSNPAMLRLSIKYE.

A signal peptide spans methionine 1–alanine 27.

The protein resides in the periplasm. This protein maintains pilus integrity and thus is an important participant in pilus assembly. It may function as molecular chaperone directly or indirectly in the correct assembly of PapA subunits. The chain is Protein PrsJ (prsJ) from Escherichia coli.